The chain runs to 30 residues: Cyclotide hyen-H (30 aa).

A cross-link (cyclopeptide (Lys-Asp)) is located at residues K1–D30. Intrachain disulfides connect C4-C20, C8-C22, and C13-C27.

In terms of processing, this is a cyclic peptide. As to expression, detected in stems (at protein level).

Probably participates in a plant defense mechanism. In Pigea enneasperma (Spade flower), this protein is Cyclotide hyen-H.